The primary structure comprises 567 residues: MLDTILINVFRRDGDDDDDDGQDPALQELYSSWALFILLVLLIGALLTSYYVQSKKIRAIHETVISVFVGMVVGLIIRVSPGLIIQNMVSFHSTYFFNVLLPPIILNSGYELHQSNFFRNIGTILTFAFAGTFISAVTLGVLVYIFSFLNFENLSMTFVEALSMGATLSATDPVTVLAIFNSYKVDQKLYTIIFGESILNDAVAIVMFETLQQFQGKTLHFFTLFSGIGIFIITFFISLLIGVSIGLITALLLKYSYLRRYPSIESCIILLMAYTSYFFSNGCHMSGVVSLLFCGITLKHYAFFNMSYKAKLSTKYVFRVLAQLSENFIFIYLGMSLFTQVDLVYKPIFILITTVAVTASRYMNVFPLSNLLNKFHRQRNGNLIDHIPYSYQMMLFWAGLRGAVGVALAAGFEGENAQTLRATTLVVVVLTLIIFGGTTARMLEILHIETGVAADVDSDTEIGMLPWQQSPEFDLENSAMELSDASAEPVVVDQQFTTEHFDEGNIAPTLSKKVSSTFEQYQRAAGAFNQFFHSSRDDQAQWLTRFDEEVIKPVLLERDNLKNGTKK.

Topologically, residues 1–31 (MLDTILINVFRRDGDDDDDDGQDPALQELYS) are lumenal. Residues 32-52 (SWALFILLVLLIGALLTSYYV) traverse the membrane as a helical segment. The Cytoplasmic portion of the chain corresponds to 53-64 (QSKKIRAIHETV). A helical transmembrane segment spans residues 65-85 (ISVFVGMVVGLIIRVSPGLII). Residues 86–87 (QN) lie on the Lumenal side of the membrane. Residues 88-108 (MVSFHSTYFFNVLLPPIILNS) traverse the membrane as a helical segment. Over 109–128 (GYELHQSNFFRNIGTILTFA) the chain is Cytoplasmic. The helical transmembrane segment at 129–149 (FAGTFISAVTLGVLVYIFSFL) threads the bilayer. The Lumenal segment spans residues 150–159 (NFENLSMTFV). The helical transmembrane segment at 160–180 (EALSMGATLSATDPVTVLAIF) threads the bilayer. Topologically, residues 181 to 188 (NSYKVDQK) are cytoplasmic. The helical transmembrane segment at 189–209 (LYTIIFGESILNDAVAIVMFE) threads the bilayer. Topologically, residues 210–227 (TLQQFQGKTLHFFTLFSG) are lumenal. Residues 228–248 (IGIFIITFFISLLIGVSIGLI) traverse the membrane as a helical segment. Over 249–277 (TALLLKYSYLRRYPSIESCIILLMAYTSY) the chain is Cytoplasmic. Residues 278–298 (FFSNGCHMSGVVSLLFCGITL) form a helical membrane-spanning segment. Residues 299–315 (KHYAFFNMSYKAKLSTK) are Lumenal-facing. Residues 316-338 (YVFRVLAQLSENFIFIYLGMSLF) traverse the membrane as a helical segment. Residues 339–347 (TQVDLVYKP) are Cytoplasmic-facing. Residues 348 to 366 (IFILITTVAVTASRYMNVF) form a helical membrane-spanning segment. At 367-392 (PLSNLLNKFHRQRNGNLIDHIPYSYQ) the chain is on the lumenal side. Residues 393 to 413 (MMLFWAGLRGAVGVALAAGFE) form a helical membrane-spanning segment. Topologically, residues 414 to 424 (GENAQTLRATT) are cytoplasmic. The chain crosses the membrane as a helical span at residues 425-445 (LVVVVLTLIIFGGTTARMLEI). At 446-567 (LHIETGVAAD…RDNLKNGTKK (122 aa)) the chain is on the lumenal side. The residue at position 515 (serine 515) is a Phosphoserine.

Belongs to the monovalent cation:proton antiporter 1 (CPA1) transporter (TC 2.A.36) family.

Its subcellular location is the golgi apparatus membrane. This is an uncharacterized protein from Schizosaccharomyces pombe (strain 972 / ATCC 24843) (Fission yeast).